Here is a 300-residue protein sequence, read N- to C-terminus: ATP synthase gamma chain (300 aa).

It belongs to the ATPase gamma chain family. In terms of assembly, F-type ATPases have 2 components, CF(1) - the catalytic core - and CF(0) - the membrane proton channel. CF(1) has five subunits: alpha(3), beta(3), gamma(1), delta(1), epsilon(1). CF(0) has three main subunits: a, b and c.

It is found in the cell membrane. Functionally, produces ATP from ADP in the presence of a proton gradient across the membrane. The gamma chain is believed to be important in regulating ATPase activity and the flow of protons through the CF(0) complex. The sequence is that of ATP synthase gamma chain from Enterococcus hirae (strain ATCC 9790 / DSM 20160 / JCM 8729 / LMG 6399 / NBRC 3181 / NCIMB 6459 / NCDO 1258 / NCTC 12367 / WDCM 00089 / R).